The sequence spans 78 residues: Beta-defensin 105 (78 aa).

The N-terminal stretch at 1-27 (MALIRKTFYFLFAMFFILVQLPSGCQA) is a signal peptide. 3 cysteine pairs are disulfide-bonded: cysteine 43–cysteine 74, cysteine 53–cysteine 67, and cysteine 57–cysteine 73.

The protein belongs to the beta-defensin family. As to expression, specifically expressed in testis.

Its subcellular location is the secreted. Functionally, has antibacterial activity. This chain is Beta-defensin 105 (DEFB105A), found in Homo sapiens (Human).